A 1474-amino-acid chain; its full sequence is SH3 and multiple ankyrin repeat domains protein 2 (1474 aa).

The span at 66–76 (LSPQLLQQTPS) shows a compositional bias: polar residues. The tract at residues 66–125 (LSPQLLQQTPSKPDGATKSLGSYAPGPRSRSPSLNRLGGAGEDGKRPQPPHWHVGSPFTP) is disordered. One can recognise an SH3 domain in the interval 148-207 (VPGRLFVAIKPYQPQVDGEIPLHRGDRVKVLSIGEGGFWEGSARGHIGWFPAECVEEVQC). Gln-162 carries the phosphoserine modification. Positions 248 to 342 (TVVLQKKDNE…HLVLKVVTVT (95 aa)) constitute a PDZ domain. Residue Ser-373 is modified to Phosphoserine. A disordered region spans residues 392–413 (RKKKDKPEEIVPASKPSRTAEN). The residue at position 457 (Ser-457) is a Phosphoserine. A Phosphothreonine modification is found at Thr-486. The interval 504–534 (LSMPDTSEDIPPPPQSVPPSPPPPSPTTYNC) is disordered. The segment covering 513 to 529 (IPPPPQSVPPSPPPPSP) has biased composition (pro residues). Phosphoserine is present on Ser-586. Disordered regions lie at residues 659-920 (TIIV…ADDK), 947-995 (PVAG…PAAA), and 1057-1153 (PALA…ESMD). A compositionally biased stretch (low complexity) spans 666 to 678 (STSSSGKSSQGSS). Basic and acidic residues predominate over residues 711 to 722 (VRDREKRLEARR). Phosphoserine is present on Ser-724. A compositionally biased stretch (gly residues) spans 783–795 (LGGGEAGAQGEAG). Composition is skewed to low complexity over residues 811 to 823 (PAAA…PASP) and 833 to 846 (RLLD…LALS). Composition is skewed to basic and acidic residues over residues 847–868 (ARDR…KADL) and 899–920 (RRQE…ADDK). Thr-903 bears the Phosphothreonine mark. The segment covering 1075 to 1085 (SLNSSQPANST) has biased composition (polar residues). Positions 1119 to 1130 (VDSRSSSDHHLE) are enriched in basic and acidic residues. Low complexity predominate over residues 1131–1151 (TTSTISTVSSISTLSSEGGES). The SH3-binding motif lies at 1169 to 1175 (PPVPPKP). 2 disordered regions span residues 1195–1216 (EDTD…SAQA) and 1260–1401 (NRGK…ISNK). Residues 1202 to 1212 (IPPPAPPPPPG) show a composition bias toward pro residues. Positions 1291–1305 (STVSGTRSTTVTFTV) are enriched in low complexity. The O-linked (GlcNAc) threonine glycan is linked to Thr-1292. Over residues 1307–1317 (PGTSQPITLQS) the composition is skewed to polar residues. A phosphoserine mark is found at Ser-1334 and Ser-1338. Composition is skewed to low complexity over residues 1352–1363 (SAAAASPSPTLS) and 1385–1399 (RSRS…QPIS). Positions 1411 to 1474 (WTKPDVADWL…ERALKQLLDR (64 aa)) constitute an SAM domain.

Belongs to the SHANK family. In terms of assembly, is part of a complex with DLG4/PSD-95 and DLGAP1/GKAP. Interacts with CTTN/cortactin SH3 domain, DLGAP1/GKAP and alpha-latrotoxin receptor 1. Interacts with DNM2, DBNL, GRID2, BAIAP2, SLC9A3, PLCB3 and CFTR. Interacts with ABI1 (via SH3 domain). Interacts (via proline-rich region) with PDE4D isoform 5 (via N-terminal region). Interacts with PDE4D isoform 33, isoform 4, isoform 7, isoform 8 and isoform 9 but not isoform 32 and isoform 6. Interacts weakly with PDE4D isoform 31. Interacts with ABI1. Expressed in epithelial cells (at protein level). All isoforms except isoform 7 are expressed predominantly in brain, with highest levels in olfactory bulb, cerebral cortex, cerebellum, central gray matter and hippocampus. Moderate levels of expression are seen in the caudate putamen, thalamic nuclei and brain stem. In cerebellum primarily expressed in Purkinje cells. Isoform 7 is not expressed in brain but expressed in liver, cholangiocytes and thymus. Isoform 7 is present in pancreas, colonic mucosa and thymocytes (at protein level).

It localises to the apical cell membrane. The protein resides in the cytoplasm. The protein localises to the synapse. Its subcellular location is the postsynaptic density. It is found in the cell projection. It localises to the growth cone. The protein resides in the dendritic spine. Seems to be an adapter protein in the postsynaptic density (PSD) of excitatory synapses that interconnects receptors of the postsynaptic membrane including NMDA-type and metabotropic glutamate receptors, and the actin-based cytoskeleton. May play a role in the structural and functional organization of the dendritic spine and synaptic junction. The chain is SH3 and multiple ankyrin repeat domains protein 2 (Shank2) from Rattus norvegicus (Rat).